The chain runs to 348 residues: Protein RecA (348 aa).

Residue 67 to 74 (GPESSGKT) participates in ATP binding.

The protein belongs to the RecA family.

It is found in the cytoplasm. Functionally, can catalyze the hydrolysis of ATP in the presence of single-stranded DNA, the ATP-dependent uptake of single-stranded DNA by duplex DNA, and the ATP-dependent hybridization of homologous single-stranded DNAs. It interacts with LexA causing its activation and leading to its autocatalytic cleavage. The protein is Protein RecA of Salinispora tropica (strain ATCC BAA-916 / DSM 44818 / JCM 13857 / NBRC 105044 / CNB-440).